The following is a 536-amino-acid chain: SNW domain-containing protein 1 (536 aa).

The disordered stretch occupies residues 1 to 46; the sequence is MALTSFLPAPTQLSQDQLEAEEKARSQRSRQTSLVSSRREPPPYGY. Ala-2 bears the N-acetylalanine mark. Position 14 is a phosphoserine (Ser-14). Residue Lys-23 forms a Glycyl lysine isopeptide (Lys-Gly) (interchain with G-Cter in SUMO2) linkage. Residues 59 to 79 form an interaction with PPIL1 region; that stretch reads GDGGAFPEIHVAQYPLDMGRK. Glycyl lysine isopeptide (Lys-Gly) (interchain with G-Cter in SUMO2) cross-links involve residues Lys-81, Lys-97, Lys-115, Lys-122, Lys-141, Lys-158, and Lys-170. An SNW region spans residues 174–339; it reads AQYIRYTPSQ…KARERRAGIK (166 aa). A phosphoserine mark is found at Ser-182 and Ser-190. Lys-193 is covalently cross-linked (Glycyl lysine isopeptide (Lys-Gly) (interchain with G-Cter in SUMO2)). The interval 209-233 is disordered; that stretch reads PPRFKINKKIPRGPPSPPAPVMHSP. 3 positions are modified to phosphoserine: Ser-224, Ser-232, and Ser-234. Residues Lys-240, Lys-258, Lys-286, Lys-339, Lys-344, Lys-416, and Lys-441 each participate in a glycyl lysine isopeptide (Lys-Gly) (interchain with G-Cter in SUMO2) cross-link. Residues 311–386 are disordered; it reads KMAQKEKEKH…RSKLQRNENR (76 aa). The residue at position 446 (Ser-446) is a Phosphoserine. Lys-452 participates in a covalent cross-link: Glycyl lysine isopeptide (Lys-Gly) (interchain with G-Cter in SUMO2). 2 stretches are compositionally biased toward basic and acidic residues: residues 470 to 489 and 503 to 530; these read NRFVPDKEFSGSDRRQRGRE and KFLEEAKQHGGSKRPSDSSRPKEHEHEG. The disordered stretch occupies residues 470–536; that stretch reads NRFVPDKEFS…EHEGKKRRKE (67 aa). Phosphoserine occurs at positions 479 and 481. A Glycyl lysine isopeptide (Lys-Gly) (interchain with G-Cter in SUMO2) cross-link involves residue Lys-509.

It belongs to the SNW family. Identified in the spliceosome C complex. Associates with U4/U6-U5 tri-small nuclear ribonucleoproteins (U4/U6-U5 tri-snRNPs). Component of the minor spliceosome, which splices U12-type introns. Interacts with SKI, SMAD2,SMAD3, RBPJ, RB1, PABPN1, MAGEA1, SIRT1, FOXN3, U2AF2, DAXX and ATP1B4. Interacts with PPIL1. Interacts with VDR and RXRA; preferentially associates with VDR:RXRA heterodimers. Interacts with NCOR2. Interacts with MAML1. Interacts with NOTCH1 NICD; the interaction involves multimerized NOTCH1 NICD. Forms a complex with NOTCH1 NICD and MAML1; the association is dissociated by RBPJ. Associates with positive transcription elongation factor b (P-TEFb). Component of the SNARP complex which consists at least of SNIP1, SNW1, THRAP3, BCLAF1 and PNN. As to quaternary structure, (Microbial infection) Interacts with human papillomavirus type-16 (HPV16) E7 protein. In terms of assembly, (Microbial infection) Interacts with EBV EBNA2; EBNA2 competes with NCOR2 for interaction with SNW1.

The protein localises to the nucleus. Its function is as follows. Involved in pre-mRNA splicing as component of the spliceosome. As a component of the minor spliceosome, involved in the splicing of U12-type introns in pre-mRNAs. Required for the specific splicing of CDKN1A pre-mRNA; the function probably involves the recruitment of U2AF2 to the mRNA. May recruit PPIL1 to the spliceosome. May be involved in cyclin-D1/CCND1 mRNA stability through the SNARP complex which associates with both the 3'end of the CCND1 gene and its mRNA. Involved in transcriptional regulation. Modulates TGF-beta-mediated transcription via association with SMAD proteins, MYOD1-mediated transcription via association with PABPN1, RB1-mediated transcriptional repression, and retinoid-X receptor (RXR)- and vitamin D receptor (VDR)-dependent gene transcription in a cell line-specific manner probably involving coactivators NCOA1 and GRIP1. Is involved in NOTCH1-mediated transcriptional activation. Binds to multimerized forms of Notch intracellular domain (NICD) and is proposed to recruit transcriptional coactivators such as MAML1 to form an intermediate preactivation complex which associates with DNA-bound CBF-1/RBPJ to form a transcriptional activation complex by releasing SNW1 and redundant NOTCH1 NICD. In terms of biological role, (Microbial infection) Is recruited by HIV-1 Tat to Tat:P-TEFb:TAR RNA complexes and is involved in Tat transcription by recruitment of MYC, MEN1 and TRRAP to the HIV promoter. (Microbial infection) Proposed to be involved in transcriptional activation by EBV EBNA2 of CBF-1/RBPJ-repressed promoters. The protein is SNW domain-containing protein 1 (SNW1) of Homo sapiens (Human).